We begin with the raw amino-acid sequence, 159 residues long: Protein-export protein SecB (159 aa).

The protein belongs to the SecB family. In terms of assembly, homotetramer, a dimer of dimers. One homotetramer interacts with 1 SecA dimer.

It localises to the cytoplasm. Functionally, one of the proteins required for the normal export of preproteins out of the cell cytoplasm. It is a molecular chaperone that binds to a subset of precursor proteins, maintaining them in a translocation-competent state. It also specifically binds to its receptor SecA. The chain is Protein-export protein SecB from Burkholderia vietnamiensis (strain G4 / LMG 22486) (Burkholderia cepacia (strain R1808)).